Reading from the N-terminus, the 336-residue chain is Adenylosuccinate synthetase (336 aa).

Residues 12-18 and 42-44 each bind GTP; these read GDEGKGK and GHS. The active-site Proton acceptor is D13. Mg(2+) is bound by residues D13 and G42. IMP is bound by residues 13–16, 40–43, T127, R141, Q179, T194, and R256; these read DEGK and NAGH. The active-site Proton donor is the H43. 252–258 is a substrate binding site; it reads TVTGRRR. Residues R258, 284-286, and 324-326 contribute to the GTP site; these read CLD and STG.

It belongs to the adenylosuccinate synthetase family. In terms of assembly, homodimer. Requires Mg(2+) as cofactor.

It is found in the cytoplasm. The catalysed reaction is IMP + L-aspartate + GTP = N(6)-(1,2-dicarboxyethyl)-AMP + GDP + phosphate + 2 H(+). It functions in the pathway purine metabolism; AMP biosynthesis via de novo pathway; AMP from IMP: step 1/2. Its function is as follows. Plays an important role in the de novo pathway of purine nucleotide biosynthesis. Catalyzes the first committed step in the biosynthesis of AMP from IMP. The chain is Adenylosuccinate synthetase from Methanococcus aeolicus (strain ATCC BAA-1280 / DSM 17508 / OCM 812 / Nankai-3).